The primary structure comprises 169 residues: Crossover junction endodeoxyribonuclease RuvC (169 aa).

Active-site residues include Asp15, Glu75, and Asp147. The Mg(2+) site is built by Asp15, Glu75, and Asp147.

Belongs to the RuvC family. As to quaternary structure, homodimer which binds Holliday junction (HJ) DNA. The HJ becomes 2-fold symmetrical on binding to RuvC with unstacked arms; it has a different conformation from HJ DNA in complex with RuvA. In the full resolvosome a probable DNA-RuvA(4)-RuvB(12)-RuvC(2) complex forms which resolves the HJ. Mg(2+) serves as cofactor.

The protein localises to the cytoplasm. It catalyses the reaction Endonucleolytic cleavage at a junction such as a reciprocal single-stranded crossover between two homologous DNA duplexes (Holliday junction).. In terms of biological role, the RuvA-RuvB-RuvC complex processes Holliday junction (HJ) DNA during genetic recombination and DNA repair. Endonuclease that resolves HJ intermediates. Cleaves cruciform DNA by making single-stranded nicks across the HJ at symmetrical positions within the homologous arms, yielding a 5'-phosphate and a 3'-hydroxyl group; requires a central core of homology in the junction. The consensus cleavage sequence is 5'-(A/T)TT(C/G)-3'. Cleavage occurs on the 3'-side of the TT dinucleotide at the point of strand exchange. HJ branch migration catalyzed by RuvA-RuvB allows RuvC to scan DNA until it finds its consensus sequence, where it cleaves and resolves the cruciform DNA. The sequence is that of Crossover junction endodeoxyribonuclease RuvC from Caulobacter sp. (strain K31).